A 202-amino-acid polypeptide reads, in one-letter code: GMP synthase [glutamine-hydrolyzing] subunit A (202 aa).

The Glutamine amidotransferase type-1 domain maps to 4 to 194 (KIYVVDNGGQ…IAICQQHKEK (191 aa)). Cysteine 81 functions as the Nucleophile in the catalytic mechanism. Residues histidine 168 and glutamate 170 contribute to the active site.

As to quaternary structure, heterodimer composed of a glutamine amidotransferase subunit (A) and a GMP-binding subunit (B).

It catalyses the reaction XMP + L-glutamine + ATP + H2O = GMP + L-glutamate + AMP + diphosphate + 2 H(+). It participates in purine metabolism; GMP biosynthesis; GMP from XMP (L-Gln route): step 1/1. In terms of biological role, catalyzes the synthesis of GMP from XMP. In Thermoplasma volcanium (strain ATCC 51530 / DSM 4299 / JCM 9571 / NBRC 15438 / GSS1), this protein is GMP synthase [glutamine-hydrolyzing] subunit A.